The primary structure comprises 212 residues: Large ribosomal subunit protein uL4 (212 aa).

Over residues 43 to 52 (NNRQGTASTK) the composition is skewed to polar residues. A disordered region spans residues 43-77 (NNRQGTASTKTRSEVRGGGRKPWRQKGTGRARAGS). Over residues 60 to 71 (GGRKPWRQKGTG) the composition is skewed to basic residues.

It belongs to the universal ribosomal protein uL4 family. In terms of assembly, part of the 50S ribosomal subunit.

In terms of biological role, one of the primary rRNA binding proteins, this protein initially binds near the 5'-end of the 23S rRNA. It is important during the early stages of 50S assembly. It makes multiple contacts with different domains of the 23S rRNA in the assembled 50S subunit and ribosome. Its function is as follows. Forms part of the polypeptide exit tunnel. The polypeptide is Large ribosomal subunit protein uL4 (Trichodesmium erythraeum (strain IMS101)).